Consider the following 3179-residue polypeptide: Guanylate cyclase beta (3179 aa).

The Cytoplasmic portion of the chain corresponds to 1–60 (MKTQTLSLMNINGKRKFLGTNNKIYRKVIINPTSEDDIQKFCRNYFRIYNFSLYNFIRRL). The helical transmembrane segment at 61-81 (ISFDAILVYSLFLTVYIFSEI) threads the bilayer. Residues 82–88 (NHGETKK) are Extracellular-facing. The chain crosses the membrane as a helical span at residues 89-109 (YLFIDTAISLFFNIILLIVIE). At 110-295 (SLFELKKLKD…FCIKMNNIVY (186 aa)) the chain is on the cytoplasmic side. Residues 296 to 316 (YLIFMYFVFVVLSIVIKTIFF) traverse the membrane as a helical segment. Over 317-328 (HKKNSFQNSRDS) the chain is Extracellular. Residues 329-349 (FLSMLEDFVGLYILVLPIMMY) traverse the membrane as a helical segment. Over 350-988 (SEKSLIYIIQ…GRLNRFSLCK (639 aa)) the chain is Cytoplasmic. A helical transmembrane segment spans residues 989-1009 (VFLWIIYLKITVVSFYFFHNF). At 1010 to 1020 (DNYFSGSSASS) the chain is on the extracellular side. A helical transmembrane segment spans residues 1021–1041 (ILYTQTTFALLHYFLIIAFSA). Residues 1042–1069 (YEIDLPYKFVRRLPYIYQLSRRKYFLNN) are Cytoplasmic-facing. The helical transmembrane segment at 1070–1090 (NIILLTIIEAILISLTSYYIL) threads the bilayer. Topologically, residues 1091 to 1102 (RLNVFHLITHRE) are extracellular. The chain crosses the membrane as a helical span at residues 1103–1123 (FTFHIFILNVFITTEKILLLS). Topologically, residues 1124–1127 (KTWH) are cytoplasmic. Residues 1128-1148 (IYFFIMAVLIIGILLIYVNIF) traverse the membrane as a helical segment. Over 1149 to 1168 (TLVDCIKNGKCEFSLFQMEN) the chain is Extracellular. A helical transmembrane segment spans residues 1169-1189 (IYFWTSLFPILYINFIFDKLM). Topologically, residues 1190 to 1304 (KYIKNRIYPD…YEKGNKLKLR (115 aa)) are cytoplasmic. The chain crosses the membrane as a helical span at residues 1305 to 1325 (IIVILLFLIYIIIFSSQTIID). Over 1326 to 1331 (INTKSN) the chain is Extracellular. Residues 1332–1352 (IHYITMFYIIYFVLACVLLIY) traverse the membrane as a helical segment. Residues 1353–1360 (IRIRNKAT) lie on the Cytoplasmic side of the membrane. Residues 1361 to 1381 (STFFFFLSRFLLICGFCIELY) form a helical membrane-spanning segment. The Extracellular portion of the chain corresponds to 1382–1401 (DNISNDILNVLITYSFTVSY). Residue N1383 is glycosylated (N-linked (GlcNAc...) asparagine). Residues 1402 to 1422 (IFFMSFKILEALLVCISILLL) form a helical membrane-spanning segment. Topologically, residues 1423–1464 (TFGVYYEKNKNMIDICTHFCSNPYLSINNLDHMNISCLCKKQ) are cytoplasmic. A helical membrane pass occupies residues 1465 to 1485 (IVIFLISLLSFTLICLSMKYY). Topologically, residues 1486–1507 (EIFYLKKKFLFRYKQKVNLAKQ) are extracellular. Residues 1508–1528 (IEILHTMLPNFLVEYLLISDP) form a helical membrane-spanning segment. Topologically, residues 1529-2739 (KNDGIMVGKN…IINIDLTKKL (1211 aa)) are cytoplasmic. The Guanylate cyclase 1 domain maps to 1548–1700 (SVIFCDIDDF…DTVNTASRMK (153 aa)). Disordered stretches follow at residues 2123-2153 (LHNY…YTSS), 2355-2379 (SINK…KDKK), and 2576-2656 (KDSD…HHHS). A compositionally biased stretch (basic residues) spans 2131 to 2142 (NKNKNKKNNKNV). Residues 2584–2607 (NNNKISKNRYNNNNNNNNSNYSNI) are compositionally biased toward low complexity. Residues 2614–2645 (HNNKKNHHHNNNKYHHHNNNKYHHHNNNKYHH) are compositionally biased toward basic residues. A helical transmembrane segment spans residues 2740-2760 (IIIFIFTEIFLSLCNIIELSF). Residues 2761 to 2770 (YEKKLRYNDS) are Extracellular-facing. An N-linked (GlcNAc...) asparagine glycan is attached at N2768. The chain crosses the membrane as a helical span at residues 2771–2791 (IVIIWLIRSIYLFIITYIWII). At 2792 to 2809 (LKTKLKEYKNNSSKMMWT) the chain is on the cytoplasmic side. Residues 2810-2830 (IFILNIFLCSWGIILIDLSCI) traverse the membrane as a helical segment. At 2831 to 2842 (HYSMLLGNKNER) the chain is on the extracellular side. The helical transmembrane segment at 2843–2863 (ALFFMKDASELIICIQLIFIK) threads the bilayer. Over 2864 to 2870 (NMLFKHK) the chain is Cytoplasmic. Residues 2871-2891 (FFFFVFFYIFLIYSFSKLFSI) form a helical membrane-spanning segment. Over 2892-2895 (HTCQ) the chain is Extracellular. The helical transmembrane segment at 2896–2916 (THICCSIILFISINILYFWYS) threads the bilayer. The Cytoplasmic portion of the chain corresponds to 2917–3179 (EYLDRIQFLV…KLRQKKGLRS (263 aa)). The region spanning 2968–3102 (AFLFADIVGF…LDVLIANKIE (135 aa)) is the Guanylate cyclase 2 domain. Mg(2+) contacts are provided by D2973, I2974, and D3017.

The protein in the N-terminal section; belongs to the cation transport ATPase (P-type) (TC 3.A.3) family. Type IV subfamily. This sequence in the C-terminal section; belongs to the adenylyl cyclase class-4/guanylyl cyclase family. Mg(2+) is required as a cofactor. Mn(2+) serves as cofactor.

The protein resides in the membrane. It catalyses the reaction GTP = 3',5'-cyclic GMP + diphosphate. Basal guanylate activity of the recombinant guanylate cyclase domains 1 and 2 is not modulated by an increase in Ca(2+) levels or by the gametogenesis inducer xanthurenic acid. Its function is as follows. Catalyzes the synthesis of the second messenger cGMP from GTP. Regulates cGMP production in gametocytes; however, is dispensable for the initiation of gametogenesis. Does not have adenylate cyclase activity. The polypeptide is Guanylate cyclase beta (Plasmodium falciparum (isolate 3D7)).